The following is a 218-amino-acid chain: N-(5'-phosphoribosyl)anthranilate isomerase (218 aa).

This sequence belongs to the TrpF family.

The catalysed reaction is N-(5-phospho-beta-D-ribosyl)anthranilate = 1-(2-carboxyphenylamino)-1-deoxy-D-ribulose 5-phosphate. It functions in the pathway amino-acid biosynthesis; L-tryptophan biosynthesis; L-tryptophan from chorismate: step 3/5. This is N-(5'-phosphoribosyl)anthranilate isomerase from Rhodopseudomonas palustris (strain BisB5).